We begin with the raw amino-acid sequence, 538 residues long: Chaperonin GroEL 1 (538 aa).

ATP contacts are provided by residues threonine 29–proline 32, aspartate 86–threonine 90, glycine 413, asparagine 478–alanine 480, and aspartate 494.

The protein belongs to the chaperonin (HSP60) family. Forms a cylinder of 14 subunits composed of two heptameric rings stacked back-to-back. Interacts with the co-chaperonin GroES.

It is found in the cytoplasm. The catalysed reaction is ATP + H2O + a folded polypeptide = ADP + phosphate + an unfolded polypeptide.. In terms of biological role, together with its co-chaperonin GroES, plays an essential role in assisting protein folding. The GroEL-GroES system forms a nano-cage that allows encapsulation of the non-native substrate proteins and provides a physical environment optimized to promote and accelerate protein folding. The protein is Chaperonin GroEL 1 of Corynebacterium glutamicum (strain R).